A 226-amino-acid polypeptide reads, in one-letter code: Thioredoxin domain-containing protein 9 (226 aa).

Positions 75–180 constitute a Thioredoxin domain; that stretch reads EIGSERDFFQ…TTETLEWRLG (106 aa). A phosphoserine mark is found at Ser-188, Ser-221, and Ser-223.

In terms of assembly, forms ternary complexes with the chaperonin TCP1 complex, spanning the cylindrical chaperonin cavity and contacting at least 2 subunits. As to expression, expressed in testis, liver, heart, kidney, brain, spleen and lung.

Its subcellular location is the cytoplasm. It localises to the nucleus. It is found in the cytoskeleton. The protein resides in the microtubule organizing center. The protein localises to the centrosome. Its subcellular location is the midbody. In terms of biological role, significantly diminishes the chaperonin TCP1 complex ATPase activity, thus negatively impacts protein folding, including that of actin or tubulin. This is Thioredoxin domain-containing protein 9 (Txndc9) from Mus musculus (Mouse).